The primary structure comprises 463 residues: Glycogen synthase (463 aa).

Residue Lys-15 coordinates ADP-alpha-D-glucose.

It belongs to the glycosyltransferase 1 family. Bacterial/plant glycogen synthase subfamily.

The enzyme catalyses [(1-&gt;4)-alpha-D-glucosyl](n) + ADP-alpha-D-glucose = [(1-&gt;4)-alpha-D-glucosyl](n+1) + ADP + H(+). It functions in the pathway glycan biosynthesis; glycogen biosynthesis. Functionally, synthesizes alpha-1,4-glucan chains using ADP-glucose. The protein is Glycogen synthase of Aquifex aeolicus (strain VF5).